The sequence spans 606 residues: Serine/threonine-protein kinase A-Raf (606 aa).

Residues 19–91 (GTVKVYLPNK…DGEELIVEVL (73 aa)) enclose the RBD domain. The Phorbol-ester/DAG-type zinc-finger motif lies at 98 to 144 (MHNFVRKTFFSLAFCDFCLKFLFHGFRCQTCGYKFHQHCSSKVPTVC). Zn(2+) is bound by residues histidine 99, cysteine 112, cysteine 115, cysteine 125, cysteine 128, histidine 133, cysteine 136, and cysteine 144. Phosphoserine occurs at positions 157 and 162. 2 disordered regions span residues 158-207 (VQDL…NAPL) and 241-290 (TDAA…DKKK). Position 181 is a phosphothreonine (threonine 181). 3 positions are modified to phosphoserine: serine 186, serine 257, and serine 269. Positions 254 to 267 (PRGSPSPASVSSGR) are enriched in low complexity. The segment covering 274–289 (SPSEQRERKSLADDKK) has biased composition (basic and acidic residues). One can recognise a Protein kinase domain in the interval 310–570 (VQLLKRIGTG…PQILATIELL (261 aa)). ATP is bound by residues 316-324 (IGTGSFGTV) and lysine 336. A Phosphothreonine modification is found at threonine 318. Residue aspartate 429 is the Proton acceptor of the active site.

The protein belongs to the protein kinase superfamily. TKL Ser/Thr protein kinase family. RAF subfamily. As to quaternary structure, interacts with TH1L/NELFD. Zn(2+) serves as cofactor. Dephosphorylation by the SHOC2-MRAS-PP1c (SMP) complex consisting of SHOC2, GTP-bound M-Ras/MRAS and the catalytic subunit of protein phosphatase 1 (PPP1CA, PPP1CB or PPP1CC); this relieves inactivation and stimulates kinase activity.

It catalyses the reaction L-seryl-[protein] + ATP = O-phospho-L-seryl-[protein] + ADP + H(+). The enzyme catalyses L-threonyl-[protein] + ATP = O-phospho-L-threonyl-[protein] + ADP + H(+). Its function is as follows. Involved in the transduction of mitogenic signals from the cell membrane to the nucleus. May also regulate the TOR signaling cascade. Phosphorylates PFKFB2. The protein is Serine/threonine-protein kinase A-Raf (ARAF) of Sus scrofa (Pig).